Reading from the N-terminus, the 440-residue chain is Ribosomal protein uS12 methylthiotransferase RimO (440 aa).

An MTTase N-terminal domain is found at 1–117 (MKIFFISLGC…ITEVIDKVLG (117 aa)). Cysteine 10, cysteine 46, cysteine 80, cysteine 154, cysteine 158, and cysteine 161 together coordinate [4Fe-4S] cluster. The Radical SAM core domain occupies 140–370 (TTGGYYSFLK…MEIQQGIAFE (231 aa)). Residues 373 to 440 (ESMVGRKLKV…KEYDLIGTAE (68 aa)) enclose the TRAM domain.

Belongs to the methylthiotransferase family. RimO subfamily. [4Fe-4S] cluster serves as cofactor.

It is found in the cytoplasm. It carries out the reaction L-aspartate(89)-[ribosomal protein uS12]-hydrogen + (sulfur carrier)-SH + AH2 + 2 S-adenosyl-L-methionine = 3-methylsulfanyl-L-aspartate(89)-[ribosomal protein uS12]-hydrogen + (sulfur carrier)-H + 5'-deoxyadenosine + L-methionine + A + S-adenosyl-L-homocysteine + 2 H(+). Functionally, catalyzes the methylthiolation of an aspartic acid residue of ribosomal protein uS12. This is Ribosomal protein uS12 methylthiotransferase RimO from Lachnoclostridium phytofermentans (strain ATCC 700394 / DSM 18823 / ISDg) (Clostridium phytofermentans).